A 182-amino-acid polypeptide reads, in one-letter code: Auxin-responsive protein IAA9 (182 aa).

Residues 1-41 form a disordered region; the sequence is MELELGLAPPNSGHLVVDELSSSSSSGGGSGSAPVSASSAG. An EAR-like (transcriptional repression) motif is present at residues 3–7; sequence LELGL. Positions 32 to 41 are enriched in low complexity; the sequence is SAPVSASSAG. Residues 92 to 182 form the PB1 domain; that stretch reads ANYVKVKKEG…RSVKRLKILG (91 aa).

The protein belongs to the Aux/IAA family. As to quaternary structure, homodimers and heterodimers. Expressed in etiolated shoots and flowers.

The protein localises to the nucleus. In terms of biological role, aux/IAA proteins are short-lived transcriptional factors that function as repressors of early auxin response genes at low auxin concentrations. The protein is Auxin-responsive protein IAA9 (IAA9) of Oryza sativa subsp. japonica (Rice).